Here is an 82-residue protein sequence, read N- to C-terminus: MKILCIFLTFFFTVSCGPSVPQKKTREVAEKKRECQLVRGACKPECNSWEYVYYYCNVNPCCVVQEYQKPIINKITSKLHQK.

The first 16 residues, Met-1–Cys-16, serve as a signal peptide directing secretion. Cystine bridges form between Cys-35-Cys-61, Cys-42-Cys-56, and Cys-46-Cys-62.

It belongs to the beta-defensin family.

It is found in the secreted. Functionally, has antibacterial activity. The polypeptide is Beta-defensin 113 (DEFB113) (Pan troglodytes (Chimpanzee)).